The following is a 450-amino-acid chain: Phosphoglucosamine mutase 2 (450 aa).

Catalysis depends on Ser-101, which acts as the Phosphoserine intermediate. Positions 101, 245, 247, and 249 each coordinate Mg(2+). Residue Ser-101 is modified to Phosphoserine.

The protein belongs to the phosphohexose mutase family. Requires Mg(2+) as cofactor. Activated by phosphorylation.

The enzyme catalyses alpha-D-glucosamine 1-phosphate = D-glucosamine 6-phosphate. In terms of biological role, catalyzes the conversion of glucosamine-6-phosphate to glucosamine-1-phosphate. This is Phosphoglucosamine mutase 2 from Shewanella frigidimarina (strain NCIMB 400).